Consider the following 215-residue polypeptide: Pyrrolidone-carboxylate peptidase (215 aa).

Active-site residues include Glu78, Cys141, and His165.

Belongs to the peptidase C15 family. In terms of assembly, homotetramer.

It is found in the cytoplasm. It catalyses the reaction Release of an N-terminal pyroglutamyl group from a polypeptide, the second amino acid generally not being Pro.. Its function is as follows. Removes 5-oxoproline from various penultimate amino acid residues except L-proline. The polypeptide is Pyrrolidone-carboxylate peptidase (Streptococcus pyogenes serotype M18 (strain MGAS8232)).